The sequence spans 352 residues: Glycerol-1-phosphate dehydrogenase [NAD(P)+] (352 aa).

NAD(+) is bound by residues 99 to 103 (GAKID) and 121 to 124 (TAPS). Residue D126 participates in substrate binding. NAD(+) is bound at residue S130. D173 serves as a coordination point for substrate. 2 residues coordinate Zn(2+): D173 and H253. H257 provides a ligand contact to substrate. Residue H269 participates in Zn(2+) binding.

This sequence belongs to the glycerol-1-phosphate dehydrogenase family. Zn(2+) serves as cofactor.

It is found in the cytoplasm. The enzyme catalyses sn-glycerol 1-phosphate + NAD(+) = dihydroxyacetone phosphate + NADH + H(+). It carries out the reaction sn-glycerol 1-phosphate + NADP(+) = dihydroxyacetone phosphate + NADPH + H(+). The protein operates within membrane lipid metabolism; glycerophospholipid metabolism. Its function is as follows. Catalyzes the NAD(P)H-dependent reduction of dihydroxyacetonephosphate (DHAP or glycerone phosphate) to glycerol 1-phosphate (G1P). The G1P thus generated is used as the glycerophosphate backbone of phospholipids in the cellular membranes of Archaea. The chain is Glycerol-1-phosphate dehydrogenase [NAD(P)+] from Thermoplasma acidophilum (strain ATCC 25905 / DSM 1728 / JCM 9062 / NBRC 15155 / AMRC-C165).